Here is a 96-residue protein sequence, read N- to C-terminus: Co-chaperonin GroES (96 aa).

It belongs to the GroES chaperonin family. In terms of assembly, heptamer of 7 subunits arranged in a ring. Interacts with the chaperonin GroEL.

It is found in the cytoplasm. In terms of biological role, together with the chaperonin GroEL, plays an essential role in assisting protein folding. The GroEL-GroES system forms a nano-cage that allows encapsulation of the non-native substrate proteins and provides a physical environment optimized to promote and accelerate protein folding. GroES binds to the apical surface of the GroEL ring, thereby capping the opening of the GroEL channel. This is Co-chaperonin GroES from Actinobacillus pleuropneumoniae serotype 5b (strain L20).